A 350-amino-acid chain; its full sequence is Secreted effector protein PipB2 (350 aa).

Pentapeptide repeat domains follow at residues 162-201 (ANLT…NLSG), 202-241 (ASLG…SLLG), 247-286 (CNCS…IMEG), and 287-326 (AVLT…TLTD).

Interacts with the host kinesin light chain (KLC), a subunit of the kinesin-1 motor complex.

The protein localises to the secreted. Its subcellular location is the host membrane. Effector proteins function to alter host cell physiology and promote bacterial survival in host tissues. Involved in the reorganization of late endosome/lysosome (LE/Lys) compartments in mammalian cells. Necessary and sufficient to link kinesin-1 onto the Salmonella-containing vacuole (SCV) membrane. Required for centrifugal extension of lysosomal glycoprotein-rich membrane tubules, known as Salmonella-induced filaments (Sifs), away from the SCV and toward the cell periphery. Required for virulence, but not for intracellular survival and replication in phagocytic cells. The sequence is that of Secreted effector protein PipB2 (pipB2) from Salmonella typhi.